The chain runs to 236 residues: MSSPRPSAELALLDIEGTTSPTAAVLSSLFPYARARLGPWVRDHGDDPEVRRIVAEARSLLGEADAPVQRVVAALTRWSDDDRKVAPLKALQGLIWAAGFAAGELTGELFDDVAPALRRWHAAGVRLAVFSSGSVLAQRAWFAATPAGDLTGLFDGYFDIDSAGPKRDPAAYRRIATELAVTPRRAVFLSDVSAELDAASAAGFATVAVLRPGEPHHLAGNHPCVASFAEMAVDAA.

Belongs to the HAD-like hydrolase superfamily. MasA/MtnC family. In terms of assembly, monomer. The cofactor is Mg(2+).

The catalysed reaction is 5-methylsulfanyl-2,3-dioxopentyl phosphate + H2O = 1,2-dihydroxy-5-(methylsulfanyl)pent-1-en-3-one + phosphate. It participates in amino-acid biosynthesis; L-methionine biosynthesis via salvage pathway; L-methionine from S-methyl-5-thio-alpha-D-ribose 1-phosphate: step 3/6. Its pathway is amino-acid biosynthesis; L-methionine biosynthesis via salvage pathway; L-methionine from S-methyl-5-thio-alpha-D-ribose 1-phosphate: step 4/6. Its function is as follows. Bifunctional enzyme that catalyzes the enolization of 2,3-diketo-5-methylthiopentyl-1-phosphate (DK-MTP-1-P) into the intermediate 2-hydroxy-3-keto-5-methylthiopentenyl-1-phosphate (HK-MTPenyl-1-P), which is then dephosphorylated to form the acireductone 1,2-dihydroxy-3-keto-5-methylthiopentene (DHK-MTPene). This chain is Enolase-phosphatase E1, found in Frankia alni (strain DSM 45986 / CECT 9034 / ACN14a).